Consider the following 173-residue polypeptide: Shikimate kinase 2 (173 aa).

Residue 12–17 coordinates ATP; the sequence is GCGKTT. The Mg(2+) site is built by threonine 16 and aspartate 32. Substrate-binding residues include aspartate 34, arginine 58, and glycine 79. The tract at residues 112 to 126 is LID domain; the sequence is EENPQDNQRPTLTGR. Arginine 120 provides a ligand contact to ATP. Residue arginine 139 coordinates substrate. Position 155 (glutamine 155) interacts with ATP.

It belongs to the shikimate kinase family. AroL subfamily. In terms of assembly, monomer. The cofactor is Mg(2+).

The protein localises to the cytoplasm. It carries out the reaction shikimate + ATP = 3-phosphoshikimate + ADP + H(+). It functions in the pathway metabolic intermediate biosynthesis; chorismate biosynthesis; chorismate from D-erythrose 4-phosphate and phosphoenolpyruvate: step 5/7. In terms of biological role, catalyzes the specific phosphorylation of the 3-hydroxyl group of shikimic acid using ATP as a cosubstrate. The polypeptide is Shikimate kinase 2 (Pectobacterium carotovorum subsp. carotovorum (strain PC1)).